Consider the following 502-residue polypeptide: RNA-splicing ligase RtcB homolog 2 (502 aa).

5 residues coordinate Mn(2+): Asp120, Cys123, His228, His260, and His354. Residue 227 to 231 (NHYAE) coordinates GMP. Residues 354–355 (HN), 403–406 (GGSM), Ser410, and 429–432 (HGAG) each bind GMP. The active-site GMP-histidine intermediate is His429.

The protein belongs to the RtcB family. In terms of assembly, catalytic component of the tRNA-splicing ligase complex. Requires Mn(2+) as cofactor.

The catalysed reaction is a 3'-end 3'-phospho-ribonucleotide-RNA + a 5'-end dephospho-ribonucleoside-RNA + GTP = a ribonucleotidyl-ribonucleotide-RNA + GMP + diphosphate. It catalyses the reaction a 3'-end 2',3'-cyclophospho-ribonucleotide-RNA + a 5'-end dephospho-ribonucleoside-RNA + GTP + H2O = a ribonucleotidyl-ribonucleotide-RNA + GMP + diphosphate + H(+). In terms of biological role, catalytic subunit of the tRNA-splicing ligase complex that acts by directly joining spliced tRNA halves to mature-sized tRNAs by incorporating the precursor-derived splice junction phosphate into the mature tRNA as a canonical 3',5'-phosphodiester. May act as an RNA ligase with broad substrate specificity, and may function toward other RNAs. The chain is RNA-splicing ligase RtcB homolog 2 from Culex quinquefasciatus (Southern house mosquito).